The sequence spans 553 residues: Adenine deaminase 1 (553 aa).

Belongs to the metallo-dependent hydrolases superfamily. Adenine deaminase family. Mn(2+) serves as cofactor.

It catalyses the reaction adenine + H2O + H(+) = hypoxanthine + NH4(+). The chain is Adenine deaminase 1 from Oenococcus oeni (strain ATCC BAA-331 / PSU-1).